Here is a 179-residue protein sequence, read N- to C-terminus: CASP-like protein 5A2 (179 aa).

Topologically, residues 1–54 are cytoplasmic; that stretch reads MEATSHPAVHPVAVPPQFQGAGPPAIQMKDFPGSPGTAGGLALRFTQFGFSLIS. Helical transmembrane passes span 55-75 and 76-96; these read LCIMVSIAGFSSVTAFCFLVA and TMVFQCIWSLCLGALDIYALL. Topologically, residues 97–114 are cytoplasmic; sequence TQRSFRNPLIVSLFVVGD. Residues 115-135 traverse the membrane as a helical segment; sequence WVTSTMTFAGACAAAGITVLI. Topologically, residues 136–154 are extracellular; that stretch reads DNDLEQCGPNHCGRFEAAA. The helical transmembrane segment at 155–175 threads the bilayer; the sequence is AMAFMSWTATTLSFCLSFWLL. The Cytoplasmic segment spans residues 176–179; that stretch reads ASCR.

The protein belongs to the Casparian strip membrane proteins (CASP) family. In terms of assembly, homodimer and heterodimers.

It is found in the cell membrane. The sequence is that of CASP-like protein 5A2 from Physcomitrium patens (Spreading-leaved earth moss).